We begin with the raw amino-acid sequence, 314 residues long: Chitinase 1 (314 aa).

The first 26 residues, 1–26, serve as a signal peptide directing secretion; that stretch reads MASVSPSSLLLLFFALLSPLLPLTSA. A GH18 domain is found at 27-296; that stretch reads LVFREYIGSQ…NVFRYEMQAQ (270 aa). Catalysis depends on E151, which acts as the Proton donor.

Belongs to the glycosyl hydrolase 18 family. Chitinase class II subfamily.

It carries out the reaction Random endo-hydrolysis of N-acetyl-beta-D-glucosaminide (1-&gt;4)-beta-linkages in chitin and chitodextrins.. Its function is as follows. Able to cleave glycolchitin. This Tulipa saxatilis subsp. bakeri (Tulip) protein is Chitinase 1.